We begin with the raw amino-acid sequence, 207 residues long: N-(5'-phosphoribosyl)anthranilate isomerase (207 aa).

The protein belongs to the TrpF family.

It carries out the reaction N-(5-phospho-beta-D-ribosyl)anthranilate = 1-(2-carboxyphenylamino)-1-deoxy-D-ribulose 5-phosphate. Its pathway is amino-acid biosynthesis; L-tryptophan biosynthesis; L-tryptophan from chorismate: step 3/5. This chain is N-(5'-phosphoribosyl)anthranilate isomerase, found in Legionella pneumophila (strain Lens).